Here is a 157-residue protein sequence, read N- to C-terminus: Ribonuclease (157 aa).

The N-terminal stretch at 1–34 is a signal peptide; sequence MMKMEGIALKKRLSWISVCLLVLVSAAGMLFSTA. A propeptide spanning residues 35–47 is cleaved from the precursor; the sequence is AKTETSSHKAHTE. Glu-120 functions as the Proton acceptor in the catalytic mechanism. His-149 serves as the catalytic Proton donor.

This sequence belongs to the ribonuclease N1/T1 family.

It localises to the secreted. Functionally, hydrolyzes phosphodiester bonds in RNA, poly- and oligoribonucleotides resulting in 3'-nucleoside monophosphates via 2',3'-cyclophosphate intermediates. The chain is Ribonuclease from Bacillus amyloliquefaciens (Bacillus velezensis).